The chain runs to 412 residues: Multifunctional CCA protein (412 aa).

ATP is bound by residues Gly-8 and Arg-11. Residues Gly-8 and Arg-11 each contribute to the CTP site. Mg(2+) is bound by residues Asp-21 and Asp-23. Arg-91, Arg-137, and Arg-140 together coordinate ATP. Residues Arg-91, Arg-137, and Arg-140 each contribute to the CTP site. The HD domain maps to Thr-225–Tyr-326.

It belongs to the tRNA nucleotidyltransferase/poly(A) polymerase family. Bacterial CCA-adding enzyme type 1 subfamily. As to quaternary structure, monomer. Can also form homodimers and oligomers. It depends on Mg(2+) as a cofactor. The cofactor is Ni(2+).

It carries out the reaction a tRNA precursor + 2 CTP + ATP = a tRNA with a 3' CCA end + 3 diphosphate. The enzyme catalyses a tRNA with a 3' CCA end + 2 CTP + ATP = a tRNA with a 3' CCACCA end + 3 diphosphate. Catalyzes the addition and repair of the essential 3'-terminal CCA sequence in tRNAs without using a nucleic acid template. Adds these three nucleotides in the order of C, C, and A to the tRNA nucleotide-73, using CTP and ATP as substrates and producing inorganic pyrophosphate. tRNA 3'-terminal CCA addition is required both for tRNA processing and repair. Also involved in tRNA surveillance by mediating tandem CCA addition to generate a CCACCA at the 3' terminus of unstable tRNAs. While stable tRNAs receive only 3'-terminal CCA, unstable tRNAs are marked with CCACCA and rapidly degraded. The chain is Multifunctional CCA protein from Nitrosomonas eutropha (strain DSM 101675 / C91 / Nm57).